Here is a 254-residue protein sequence, read N- to C-terminus: Leucyl/phenylalanyl-tRNA--protein transferase (254 aa).

This sequence belongs to the L/F-transferase family.

It is found in the cytoplasm. The enzyme catalyses N-terminal L-lysyl-[protein] + L-leucyl-tRNA(Leu) = N-terminal L-leucyl-L-lysyl-[protein] + tRNA(Leu) + H(+). The catalysed reaction is N-terminal L-arginyl-[protein] + L-leucyl-tRNA(Leu) = N-terminal L-leucyl-L-arginyl-[protein] + tRNA(Leu) + H(+). It carries out the reaction L-phenylalanyl-tRNA(Phe) + an N-terminal L-alpha-aminoacyl-[protein] = an N-terminal L-phenylalanyl-L-alpha-aminoacyl-[protein] + tRNA(Phe). Its function is as follows. Functions in the N-end rule pathway of protein degradation where it conjugates Leu, Phe and, less efficiently, Met from aminoacyl-tRNAs to the N-termini of proteins containing an N-terminal arginine or lysine. This is Leucyl/phenylalanyl-tRNA--protein transferase from Burkholderia vietnamiensis (strain G4 / LMG 22486) (Burkholderia cepacia (strain R1808)).